Reading from the N-terminus, the 571-residue chain is Membrane protein insertase YidC (571 aa).

A helical transmembrane segment spans residues 4–24; that stretch reads TRVFLIFAWLMVAVLLWMEWS. Residues 29–78 are disordered; the sequence is APTPAPTTTSAPAAAQSVPGANPGAIPSAQVPGAPGQAAAQAQASATPAS. Composition is skewed to low complexity over residues 34-43 and 55-78; these read PTTTSAPAAA and PSAQ…TPAS. Transmembrane regions (helical) follow at residues 369–389, 440–460, 483–503, and 518–538; these read LVGN…LVLY, GGCL…WVLV, YFIL…LTPA, and PLVF…YWVV.

Belongs to the OXA1/ALB3/YidC family. Type 1 subfamily. As to quaternary structure, interacts with the Sec translocase complex via SecD. Specifically interacts with transmembrane segments of nascent integral membrane proteins during membrane integration.

It localises to the cell inner membrane. Required for the insertion and/or proper folding and/or complex formation of integral membrane proteins into the membrane. Involved in integration of membrane proteins that insert both dependently and independently of the Sec translocase complex, as well as at least some lipoproteins. Aids folding of multispanning membrane proteins. This Stenotrophomonas maltophilia (strain K279a) protein is Membrane protein insertase YidC.